The chain runs to 134 residues: Small ribosomal subunit protein uS9 (134 aa).

Residues 109-134 are disordered; the sequence is DARRTEPHKPSKSSKGPRAKRQKSYR. Positions 118–134 are enriched in basic residues; sequence PSKSSKGPRAKRQKSYR.

It belongs to the universal ribosomal protein uS9 family.

The sequence is that of Small ribosomal subunit protein uS9 from Methanococcus maripaludis (strain DSM 14266 / JCM 13030 / NBRC 101832 / S2 / LL).